A 180-amino-acid chain; its full sequence is Large ribosomal subunit protein uL6 (180 aa).

It belongs to the universal ribosomal protein uL6 family. As to quaternary structure, part of the 50S ribosomal subunit.

This protein binds to the 23S rRNA, and is important in its secondary structure. It is located near the subunit interface in the base of the L7/L12 stalk, and near the tRNA binding site of the peptidyltransferase center. The polypeptide is Large ribosomal subunit protein uL6 (Borreliella burgdorferi (strain ATCC 35210 / DSM 4680 / CIP 102532 / B31) (Borrelia burgdorferi)).